We begin with the raw amino-acid sequence, 47 residues long: Small, acid-soluble spore protein N (47 aa).

Polar residues-rich tracts occupy residues 1–11 (MGNPKSNQQPF) and 29–47 (KQMQ…TKGE). The tract at residues 1–47 (MGNPKSNQQPFVPQHIGTKPREAGGNKGKQMQDQSGQHPQVIQTKGE) is disordered.

The protein belongs to the SspN family.

The protein resides in the spore core. This is Small, acid-soluble spore protein N from Anoxybacillus flavithermus (strain DSM 21510 / WK1).